Reading from the N-terminus, the 465-residue chain is Putative multidrug resistance protein MdtD (465 aa).

12 consecutive transmembrane segments (helical) span residues 12–32 (LWIV…VNTA), 49–69 (SVIV…GWLA), 72–92 (IGVK…SLMC), 138–158 (FVTL…GFLV), 165–185 (WIFL…LLLM), 195–215 (FDIS…LALD), 219–239 (GLGL…IALG), 267–287 (LVGS…TPIF), 290–310 (IGLG…IIGS), 329–351 (VLVN…AIMG), 393–413 (LLSM…GILL), and 430–450 (SAFL…ALIF).

This sequence belongs to the major facilitator superfamily. TCR/Tet family.

The protein resides in the cell inner membrane. In Yersinia pseudotuberculosis serotype I (strain IP32953), this protein is Putative multidrug resistance protein MdtD.